The sequence spans 874 residues: Alanine--tRNA ligase (874 aa).

Residues His563, His567, Cys665, and His669 each contribute to the Zn(2+) site.

It belongs to the class-II aminoacyl-tRNA synthetase family. Requires Zn(2+) as cofactor.

Its subcellular location is the cytoplasm. The enzyme catalyses tRNA(Ala) + L-alanine + ATP = L-alanyl-tRNA(Ala) + AMP + diphosphate. Its function is as follows. Catalyzes the attachment of alanine to tRNA(Ala) in a two-step reaction: alanine is first activated by ATP to form Ala-AMP and then transferred to the acceptor end of tRNA(Ala). Also edits incorrectly charged Ser-tRNA(Ala) and Gly-tRNA(Ala) via its editing domain. The protein is Alanine--tRNA ligase of Actinobacillus pleuropneumoniae serotype 3 (strain JL03).